Reading from the N-terminus, the 80-residue chain is MSQQKQQSWKPPNVPKCSPPQRSNPCLAPYSTPCGAPHSEGCHSSSQRPEVQKPRRARQKLRCLSRGTTYHCKEEECEGD.

Polar residues predominate over residues 1 to 10 (MSQQKQQSWK). Disordered regions lie at residues 1 to 21 (MSQQ…SPPQ) and 35 to 60 (GAPH…ARQK).

The protein belongs to the LCE family.

Its function is as follows. Precursors of the cornified envelope of the stratum corneum. The polypeptide is Late cornified envelope protein 6A (LCE6A) (Homo sapiens (Human)).